The primary structure comprises 334 residues: Methionyl-tRNA formyltransferase (334 aa).

Position 111-114 (111-114) interacts with (6S)-5,6,7,8-tetrahydrofolate; that stretch reads SILP.

It belongs to the Fmt family.

It carries out the reaction L-methionyl-tRNA(fMet) + (6R)-10-formyltetrahydrofolate = N-formyl-L-methionyl-tRNA(fMet) + (6S)-5,6,7,8-tetrahydrofolate + H(+). In terms of biological role, attaches a formyl group to the free amino group of methionyl-tRNA(fMet). The formyl group appears to play a dual role in the initiator identity of N-formylmethionyl-tRNA by promoting its recognition by IF2 and preventing the misappropriation of this tRNA by the elongation apparatus. This chain is Methionyl-tRNA formyltransferase, found in Gloeothece citriformis (strain PCC 7424) (Cyanothece sp. (strain PCC 7424)).